Consider the following 478-residue polypeptide: Serine hydroxymethyltransferase, cytosolic (478 aa).

The residue at position 251 (Lys251) is an N6-(pyridoxal phosphate)lysine.

Belongs to the SHMT family. Homotetramer. Identified in complex with FAM175B and the other subunits of the BRISC complex, at least composed of FAM175B/ABRO1, BRCC3/BRCC36, BABAM2 and BABAM1/NBA1. Requires pyridoxal 5'-phosphate as cofactor.

The protein localises to the cytoplasm. The catalysed reaction is (6R)-5,10-methylene-5,6,7,8-tetrahydrofolate + glycine + H2O = (6S)-5,6,7,8-tetrahydrofolate + L-serine. Its pathway is one-carbon metabolism; tetrahydrofolate interconversion. In terms of biological role, interconversion of serine and glycine. The chain is Serine hydroxymethyltransferase, cytosolic (Shmt1) from Mus musculus (Mouse).